Here is a 101-residue protein sequence, read N- to C-terminus: MANVTVTFTITEFCLHTGISEEELNEIVGLGVVEPSEIQETTWVFDDHAAIVVQRAVRLRHELALDWPGIAVALTLMDDIAHLKQENRLLRQRLSRFVAHP.

It belongs to the CbpM family.

Its function is as follows. Interacts with CbpA and inhibits both the DnaJ-like co-chaperone activity and the DNA binding activity of CbpA. Together with CbpA, modulates the activity of the DnaK chaperone system. Does not inhibit the co-chaperone activity of DnaJ. The polypeptide is Chaperone modulatory protein CbpM (Escherichia coli O1:K1 / APEC).